A 435-amino-acid chain; its full sequence is GTPase Der (435 aa).

EngA-type G domains are found at residues 4–167 (PVVA…PAEK) and 175–350 (ISFS…DNQN). GTP contacts are provided by residues 10-17 (GQPNVGKS), 57-61 (DTGGI), 119-122 (NKAD), 181-188 (GRPNVGKS), 228-232 (DTAGI), and 293-296 (NKWD). Positions 351–435 (QRIQSSVLND…PIKILPRKRK (85 aa)) constitute a KH-like domain.

Belongs to the TRAFAC class TrmE-Era-EngA-EngB-Septin-like GTPase superfamily. EngA (Der) GTPase family. As to quaternary structure, associates with the 50S ribosomal subunit.

In terms of biological role, GTPase that plays an essential role in the late steps of ribosome biogenesis. The chain is GTPase Der from Lactobacillus helveticus (strain DPC 4571).